The chain runs to 267 residues: 4-hydroxy-tetrahydrodipicolinate reductase (267 aa).

10-15 (GCLGKQ) provides a ligand contact to NAD(+). Position 37 (arginine 37) interacts with NADP(+). NAD(+)-binding positions include 99–101 (GTT) and 122–125 (TTNV). Residue histidine 154 is the Proton donor/acceptor of the active site. Position 155 (histidine 155) interacts with (S)-2,3,4,5-tetrahydrodipicolinate. Lysine 158 functions as the Proton donor in the catalytic mechanism. 164 to 165 (GT) serves as a coordination point for (S)-2,3,4,5-tetrahydrodipicolinate.

The protein belongs to the DapB family.

The protein resides in the cytoplasm. It catalyses the reaction (S)-2,3,4,5-tetrahydrodipicolinate + NAD(+) + H2O = (2S,4S)-4-hydroxy-2,3,4,5-tetrahydrodipicolinate + NADH + H(+). The enzyme catalyses (S)-2,3,4,5-tetrahydrodipicolinate + NADP(+) + H2O = (2S,4S)-4-hydroxy-2,3,4,5-tetrahydrodipicolinate + NADPH + H(+). Its pathway is amino-acid biosynthesis; L-lysine biosynthesis via DAP pathway; (S)-tetrahydrodipicolinate from L-aspartate: step 4/4. In terms of biological role, catalyzes the conversion of 4-hydroxy-tetrahydrodipicolinate (HTPA) to tetrahydrodipicolinate. The sequence is that of 4-hydroxy-tetrahydrodipicolinate reductase from Ehrlichia canis (strain Jake).